A 350-amino-acid polypeptide reads, in one-letter code: Guanine nucleotide-binding protein G(t) subunit alpha-1 (350 aa).

The interval 1–21 is disordered; the sequence is MGAGASAEEKHSRELEKKLKE. Glycine 2 carries the N-myristoyl glycine lipid modification. Basic and acidic residues predominate over residues 7–21; it reads AEEKHSRELEKKLKE. One can recognise a G-alpha domain in the interval 28-350; it reads RTVKLLLLGA…KENLKDCGLF (323 aa). Residues 31 to 44 are G1 motif; the sequence is KLLLLGAGESGKST. 36-43 serves as a coordination point for GTP; that stretch reads GAGESGKS. Serine 43 is a Mg(2+) binding site. Tyrosine 142 is subject to Phosphotyrosine. Residues aspartate 146, 171 to 177, glycine 199, 265 to 268, and alanine 322 each bind GTP; these read LRSRVKT and NKKD. The tract at residues 169–177 is G2 motif; the sequence is DVLRSRVKT. Residue threonine 177 coordinates Mg(2+). The interval 192-201 is G3 motif; that stretch reads FRMFDVGGQR. The segment at 261–268 is G4 motif; sequence VLFLNKKD. The segment at 320 to 325 is G5 motif; the sequence is TCATDT. The segment at 340 to 350 is interaction with RHO; sequence IKENLKDCGLF.

Heterotrimeric G proteins are composed of 3 subunits alpha, beta and gamma. The alpha chain contains the guanine nucleotide binding site. Interacts with RHO. Interacts with RGS9 and PDE6G. Interacts (when myristoylated) with UNC119; interaction is required for localization in sensory neurons. In terms of tissue distribution, rod.

The protein resides in the cell projection. It is found in the cilium. The protein localises to the photoreceptor outer segment. It localises to the membrane. Its subcellular location is the photoreceptor inner segment. Functions as a signal transducer for the rod photoreceptor RHO. Required for normal RHO-mediated light perception by the retina. Guanine nucleotide-binding proteins (G proteins) function as transducers downstream of G protein-coupled receptors (GPCRs), such as the photoreceptor RHO. The alpha chain contains the guanine nucleotide binding site and alternates between an active, GTP-bound state and an inactive, GDP-bound state. Activated RHO promotes GDP release and GTP binding. Signaling is mediated via downstream effector proteins, such as cGMP-phosphodiesterase. This chain is Guanine nucleotide-binding protein G(t) subunit alpha-1 (GNAT1), found in Bos taurus (Bovine).